The primary structure comprises 509 residues: ATP synthase subunit alpha (509 aa).

Position 169–176 (G169–T176) interacts with ATP.

This sequence belongs to the ATPase alpha/beta chains family. In terms of assembly, F-type ATPases have 2 components, CF(1) - the catalytic core - and CF(0) - the membrane proton channel. CF(1) has five subunits: alpha(3), beta(3), gamma(1), delta(1), epsilon(1). CF(0) has three main subunits: a(1), b(2) and c(9-12). The alpha and beta chains form an alternating ring which encloses part of the gamma chain. CF(1) is attached to CF(0) by a central stalk formed by the gamma and epsilon chains, while a peripheral stalk is formed by the delta and b chains.

Its subcellular location is the cell inner membrane. It carries out the reaction ATP + H2O + 4 H(+)(in) = ADP + phosphate + 5 H(+)(out). Its function is as follows. Produces ATP from ADP in the presence of a proton gradient across the membrane. The alpha chain is a regulatory subunit. This is ATP synthase subunit alpha from Methylobacterium sp. (strain 4-46).